Consider the following 267-residue polypeptide: 2-keto-3-deoxy-L-rhamnonate aldolase (267 aa).

Histidine 49 functions as the Proton acceptor in the catalytic mechanism. Position 151 (glutamine 151) interacts with substrate. Glutamate 153 is a Mg(2+) binding site. Residues alanine 178 and aspartate 179 each contribute to the substrate site. Aspartate 179 lines the Mg(2+) pocket.

This sequence belongs to the HpcH/HpaI aldolase family. KDR aldolase subfamily. As to quaternary structure, homohexamer. Requires Mg(2+) as cofactor.

It catalyses the reaction 2-dehydro-3-deoxy-L-rhamnonate = (S)-lactaldehyde + pyruvate. Catalyzes the reversible retro-aldol cleavage of 2-keto-3-deoxy-L-rhamnonate (KDR) to pyruvate and lactaldehyde. The polypeptide is 2-keto-3-deoxy-L-rhamnonate aldolase (Escherichia coli O17:K52:H18 (strain UMN026 / ExPEC)).